Here is a 371-residue protein sequence, read N- to C-terminus: Chaperone protein DnaJ (371 aa).

The J domain maps to 5–69 (EFYDRLGVSK…QKRAAYDQYG (65 aa)). The segment at 127-209 (GAEKEVSYNR…CHGTGHEKKT (83 aa)) adopts a CR-type zinc-finger fold. Zn(2+) is bound by residues Cys140, Cys143, Cys157, Cys160, Cys183, Cys186, Cys197, and Cys200. CXXCXGXG motif repeat units lie at residues 140–147 (CHTCSGSG), 157–164 (CQKCHGSG), 183–190 (CDVCQGSG), and 197–204 (CPTCHGTG).

This sequence belongs to the DnaJ family. Homodimer. Zn(2+) is required as a cofactor.

The protein resides in the cytoplasm. Participates actively in the response to hyperosmotic and heat shock by preventing the aggregation of stress-denatured proteins and by disaggregating proteins, also in an autonomous, DnaK-independent fashion. Unfolded proteins bind initially to DnaJ; upon interaction with the DnaJ-bound protein, DnaK hydrolyzes its bound ATP, resulting in the formation of a stable complex. GrpE releases ADP from DnaK; ATP binding to DnaK triggers the release of the substrate protein, thus completing the reaction cycle. Several rounds of ATP-dependent interactions between DnaJ, DnaK and GrpE are required for fully efficient folding. Also involved, together with DnaK and GrpE, in the DNA replication of plasmids through activation of initiation proteins. The chain is Chaperone protein DnaJ from Streptococcus agalactiae serotype Ia (strain ATCC 27591 / A909 / CDC SS700).